Consider the following 398-residue polypeptide: Protein-glutamate methylesterase/protein-glutamine glutaminase (398 aa).

Positions 4–121 constitute a Response regulatory domain; that stretch reads KVLVVDDSSF…ATNKDDAILL (118 aa). At Asp55 the chain carries 4-aspartylphosphate. The disordered stretch occupies residues 133–200; it reads RMYRSSSLTP…SANPTTSSIS (68 aa). 2 stretches are compositionally biased toward polar residues: residues 136–146 and 168–200; these read RSSSLTPTSTI and RLAS…SSIS. The 194-residue stretch at 205–398 folds into the CheB-type methylesterase domain; it reads SGKQYKLLLI…EAILKESSRG (194 aa). Catalysis depends on residues Ser217, His244, and Asp340.

This sequence belongs to the CheB family. In terms of processing, phosphorylated by CheA. Phosphorylation of the N-terminal regulatory domain activates the methylesterase activity.

The protein resides in the cytoplasm. The enzyme catalyses [protein]-L-glutamate 5-O-methyl ester + H2O = L-glutamyl-[protein] + methanol + H(+). It carries out the reaction L-glutaminyl-[protein] + H2O = L-glutamyl-[protein] + NH4(+). Involved in chemotaxis. Part of a chemotaxis signal transduction system that modulates chemotaxis in response to various stimuli. Catalyzes the demethylation of specific methylglutamate residues introduced into the chemoreceptors (methyl-accepting chemotaxis proteins or MCP) by CheR. Also mediates the irreversible deamidation of specific glutamine residues to glutamic acid. This is Protein-glutamate methylesterase/protein-glutamine glutaminase from Shewanella frigidimarina (strain NCIMB 400).